Consider the following 120-residue polypeptide: UPF0102 protein Daro_0503 (120 aa).

The interval 1 to 20 (MQVKANDTTTARGREAEDRA) is disordered.

The protein belongs to the UPF0102 family.

In Dechloromonas aromatica (strain RCB), this protein is UPF0102 protein Daro_0503.